The chain runs to 249 residues: DNA polymerase sliding clamp 1 (249 aa).

This sequence belongs to the PCNA family. In terms of assembly, homotrimer. The subunits circularize to form a toroid; DNA passes through its center. Replication factor C (RFC) is required to load the toroid on the DNA.

Its function is as follows. Sliding clamp subunit that acts as a moving platform for DNA processing. Responsible for tethering the catalytic subunit of DNA polymerase and other proteins to DNA during high-speed replication. The polypeptide is DNA polymerase sliding clamp 1 (Pyrobaculum aerophilum (strain ATCC 51768 / DSM 7523 / JCM 9630 / CIP 104966 / NBRC 100827 / IM2)).